The following is a 600-amino-acid chain: Terpenoid synthase 8 (600 aa).

Residues Asp352, Asp356, Asn497, and Asp505 each contribute to the Mg(2+) site. A DDXXD motif motif is present at residues Asp352–Asp356.

It belongs to the terpene synthase family. Tpsa subfamily. It depends on Mg(2+) as a cofactor. Mn(2+) serves as cofactor. As to expression, stele, and tips of primary and secondary root.

The protein localises to the plastid. It carries out the reaction (2E,6E,10E)-geranylgeranyl diphosphate = rhizathalene A + diphosphate. It participates in secondary metabolite biosynthesis; terpenoid biosynthesis. Catalyzes the synthesis of the semivolatile diterpene rhizatalene A. The polypeptide is Terpenoid synthase 8 (TPS08) (Arabidopsis thaliana (Mouse-ear cress)).